The primary structure comprises 430 residues: Adenylosuccinate synthetase (430 aa).

Residues 17–23 and 45–47 each bind GTP; these read GDEGKGK and GHT. Aspartate 18 functions as the Proton acceptor in the catalytic mechanism. Mg(2+) contacts are provided by aspartate 18 and glycine 45. Residues 18 to 21, 43 to 46, threonine 139, arginine 153, asparagine 229, threonine 244, and arginine 308 contribute to the IMP site; these read DEGK and NAGH. Histidine 46 serves as the catalytic Proton donor. 304–310 contacts substrate; it reads TVTGRRR. GTP is bound by residues arginine 310, 336–338, and 418–420; these read KLD and GVG.

Belongs to the adenylosuccinate synthetase family. Homodimer. The cofactor is Mg(2+).

It is found in the cytoplasm. It catalyses the reaction IMP + L-aspartate + GTP = N(6)-(1,2-dicarboxyethyl)-AMP + GDP + phosphate + 2 H(+). Its pathway is purine metabolism; AMP biosynthesis via de novo pathway; AMP from IMP: step 1/2. Plays an important role in the de novo pathway and in the salvage pathway of purine nucleotide biosynthesis. Catalyzes the first committed step in the biosynthesis of AMP from IMP. The polypeptide is Adenylosuccinate synthetase (Cryptococcus neoformans var. neoformans serotype D (strain JEC21 / ATCC MYA-565) (Filobasidiella neoformans)).